Reading from the N-terminus, the 122-residue chain is Large ribosomal subunit protein uL14 (122 aa).

Belongs to the universal ribosomal protein uL14 family. In terms of assembly, part of the 50S ribosomal subunit. Forms a cluster with proteins L3 and L19. In the 70S ribosome, L14 and L19 interact and together make contacts with the 16S rRNA in bridges B5 and B8.

Functionally, binds to 23S rRNA. Forms part of two intersubunit bridges in the 70S ribosome. The protein is Large ribosomal subunit protein uL14 of Syntrophobacter fumaroxidans (strain DSM 10017 / MPOB).